Here is a 760-residue protein sequence, read N- to C-terminus: MRFLLVGFVALLAVSAFIPNVYAEDEIEDAPKETKEETREEDSIKLDGLSVSQIKELRSKAEKHEFQAEVNRMMKLIINSLYRNKEIFLRELISNASDALDKIRLLSLTDPEQLRETEEMSVKIKADRENRLLHITDTGVGMTRQDLINNLGTIARSGTSEFLSKLMDTATSSDQQQDLIGQFGVGFYAAFLVADRVVVTTKNNDDDQYIWESDSASFTISKDPRGNTLKRGTQITLYLKEEAADFLEPDTLKNLVHKYSQFINFDIFLWQSKTEMVEEAVEEEPATTEDGAVEEEKEEKKTKKVEKTTWDWEKVNNVKPIWMRKPNQVEEDEYKQFYKSITKDSEEPLSHVHFSAEGEVSFRSILYVPKKSPNDMFQNYGKVIENIKLYVRRVFITDDFADMLPKYLSFIRGIVDSDDLPLNVSRENLQQHKLLKVIKKKLVRKVLDMLKKLDGAQFDDFWSEFSTNIKLGVMEDPSNRMRLAKLLRFQSSNDADKTTTLAAYVERMKEKQDAIYYMAGTSRKEVETSPFVERLIAKGYEVLFLTEAVDEYCIQAMPEYESKKFQNVAKEGVTIDDGEKAKEAHKGLEEEFKPLTDWLKETALKDLIEKAVVSQRLVKSPSALVASSYGWSGNMERIMKSQAYAKAKDPTQDFYATQKKTFEINPRHPVIKELLKRVTASEEDTTAASTAKLLFETATLRSGFSLQDQVGFADRIEAVLRQSLDVSQDAQVETEQHIEEAEPEPEAAEETTIEEEHSEL.

Positions 1-23 are cleaved as a signal peptide; it reads MRFLLVGFVALLAVSAFIPNVYA. Residues asparagine 95, aspartate 137, asparagine 150, and phenylalanine 187 each coordinate ATP. Residue asparagine 95 is glycosylated (N-linked (GlcNAc...) asparagine). N-linked (GlcNAc...) asparagine glycosylation occurs at asparagine 423. A disordered region spans residues 727–760; the sequence is SQDAQVETEQHIEEAEPEPEAAEETTIEEEHSEL. Positions 741 to 760 are enriched in acidic residues; sequence AEPEPEAAEETTIEEEHSEL. The Prevents secretion from ER motif lies at 757-760; that stretch reads HSEL.

This sequence belongs to the heat shock protein 90 family.

The protein localises to the endoplasmic reticulum lumen. Its function is as follows. Molecular chaperone that functions in the processing and transport of secreted proteins. In Caenorhabditis elegans, this protein is Endoplasmin homolog.